The following is a 494-amino-acid chain: DEAD-box ATP-dependent RNA helicase 20 (494 aa).

Positions 1–20 (MSRFDGRAADPGSYRDRRSE) are enriched in basic and acidic residues. The tract at residues 1 to 39 (MSRFDGRAADPGSYRDRRSEGAFGGGTRAFAPTSKADSA) is disordered. Residues 29–39 (AFAPTSKADSA) show a composition bias toward low complexity. Residues 91-119 (REFRDVGFPEYVLQEITKAGFVEPTPIQS) carry the Q motif motif. The region spanning 122–297 (WPMALRGRDL…RNFLFDPYKV (176 aa)) is the Helicase ATP-binding domain. An ATP-binding site is contributed by 135 to 142 (AETGSGKT). A DEAD box motif is present at residues 245-248 (DEAD). The Helicase C-terminal domain maps to 325-470 (KLVNLLEDIM…KVSPELANMG (146 aa)). Residues 465–494 (ELANMGRGAPPPSSGHRDRYRGYGGGRSWS) form a disordered region.

It belongs to the DEAD box helicase family. DDX5/DBP2 subfamily.

It is found in the nucleus. It catalyses the reaction ATP + H2O = ADP + phosphate + H(+). ATP-dependent RNA helicase involved nonsense-mediated mRNA decay and ribosome biogenesis through rRNA processing. In Oryza sativa subsp. japonica (Rice), this protein is DEAD-box ATP-dependent RNA helicase 20.